Consider the following 510-residue polypeptide: 1,3-beta-glucanosyltransferase gas5 (510 aa).

Positions 1 to 22 (MNFLHFLTTSLLLLGGSRLALA) are cleaved as a signal peptide. An intrachain disulfide couples C70 to C99. (1,3-beta-D-glucosyl)n is bound at residue Y88. The N-linked (GlcNAc...) asparagine glycan is linked to N147. 4 residues coordinate (1,3-beta-D-glucosyl)n: N158, E159, D200, and R205. The active-site Proton donor is E159. Cystine bridges form between C214/C353 and C232/C264. N216 and N252 each carry an N-linked (GlcNAc...) asparagine glycan. E261 functions as the Nucleophile in the catalytic mechanism. Residue Y300 coordinates (1,3-beta-D-glucosyl)n. N318, N337, and N397 each carry an N-linked (GlcNAc...) asparagine glycan. Residues 424 to 456 (QSSTSGSSSGSSSASTTASSSSVSSGSSISSGS) form a disordered region. Residue S485 is the site of GPI-anchor amidated serine attachment. Residues 486–510 (SASTFNLSRFYVFAGILAISGLVFA) constitute a propeptide, removed in mature form. A glycan (N-linked (GlcNAc...) asparagine) is linked at N491.

This sequence belongs to the glycosyl hydrolase 72 family. Post-translationally, the GPI-anchor is attached to the protein in the endoplasmic reticulum and serves to target the protein to the cell surface. There, the glucosamine-inositol phospholipid moiety is cleaved off and the GPI-modified mannoprotein is covalently attached via its lipidless GPI glycan remnant to the 1,6-beta-glucan of the outer cell wall layer.

It is found in the secreted. Its subcellular location is the cell wall. It localises to the membrane. Functionally, splits internally a 1,3-beta-glucan molecule and transfers the newly generated reducing end (the donor) to the non-reducing end of another 1,3-beta-glucan molecule (the acceptor) forming a 1,3-beta linkage, resulting in the elongation of 1,3-beta-glucan chains in the cell wall. The chain is 1,3-beta-glucanosyltransferase gas5 (gas5) from Schizosaccharomyces pombe (strain 972 / ATCC 24843) (Fission yeast).